A 717-amino-acid chain; its full sequence is Glycine--tRNA ligase beta subunit (717 aa).

This sequence belongs to the class-II aminoacyl-tRNA synthetase family. As to quaternary structure, tetramer of two alpha and two beta subunits.

The protein localises to the cytoplasm. It catalyses the reaction tRNA(Gly) + glycine + ATP = glycyl-tRNA(Gly) + AMP + diphosphate. The polypeptide is Glycine--tRNA ligase beta subunit (Gloeothece citriformis (strain PCC 7424) (Cyanothece sp. (strain PCC 7424))).